Here is a 71-residue protein sequence, read N- to C-terminus: High-potential iron-sulfur protein (71 aa).

Gln1 carries the pyrrolidone carboxylic acid modification. The [4Fe-4S] cluster site is built by Cys37, Cys40, Cys50, and Cys64.

The protein belongs to the high-potential iron-sulfur protein (HiPIP) family. In terms of assembly, homodimer.

Specific class of high-redox-potential 4Fe-4S ferredoxins. Functions in anaerobic electron transport in most purple and in some other photosynthetic bacteria and in at least one genus (Paracoccus) of halophilic, denitrifying bacteria. This Halomonas halodenitrificans (strain ATCC 12084 / NCIMB 8669) (Paracoccus halodenitrificans) protein is High-potential iron-sulfur protein (hip).